We begin with the raw amino-acid sequence, 96 residues long: Co-chaperonin GroES (96 aa).

The protein belongs to the GroES chaperonin family. In terms of assembly, heptamer of 7 subunits arranged in a ring. Interacts with the chaperonin GroEL.

The protein localises to the cytoplasm. Functionally, together with the chaperonin GroEL, plays an essential role in assisting protein folding. The GroEL-GroES system forms a nano-cage that allows encapsulation of the non-native substrate proteins and provides a physical environment optimized to promote and accelerate protein folding. GroES binds to the apical surface of the GroEL ring, thereby capping the opening of the GroEL channel. This chain is Co-chaperonin GroES, found in Teredinibacter turnerae (strain ATCC 39867 / T7901).